The chain runs to 1099 residues: Sodium/potassium/calcium exchanger 1 (1099 aa).

At 1-452 (MGKLIRMGPQ…DLFSVEERRQ (452 aa)) the chain is on the extracellular side. Over residues 123–134 (PTTTKNNYSPTA) the composition is skewed to polar residues. Disordered regions lie at residues 123–150 (PTTTKNNYSPTAAGTERRKEDTPTSSRT), 169–199 (TPRGEMKSYSPTQVREKVKYTPSPRGRRVGT), and 284–304 (PRRVESNSSAHPWGLVGKSNP). An N-linked (GlcNAc...) asparagine glycan is attached at Asn-290. A helical transmembrane segment spans residues 453–473 (GWVVLHVFGMMYVFVALAIVC). Residues 474–497 (DEYFVPALGVITDKLQISEDVAGA) lie on the Cytoplasmic side of the membrane. Residues 494-534 (VAGATFMAAGGSAPELFTSLIGVFISHSNVGIGTIVGSAVF) form an Alpha-1 repeat. A helical membrane pass occupies residues 498–518 (TFMAAGGSAPELFTSLIGVFI). At 519–522 (SHSN) the chain is on the extracellular side. The helical transmembrane segment at 523-543 (VGIGTIVGSAVFNILFVIGTC) threads the bilayer. Over 544-563 (SLFSREILNLTWWPLFRDVS) the chain is Cytoplasmic. A helical membrane pass occupies residues 564-584 (FYILDLIMLILFFLDSLIAWW). Glu-585 is a topological domain (extracellular). The chain crosses the membrane as a helical span at residues 586-606 (SLLLLLAYAFYVFTMKWNKHI). The Cytoplasmic portion of the chain corresponds to 607-907 (EVWVKEQLSR…SLDWPETRQK (301 aa)). Residue Ser-658 is modified to Phosphoserine. The segment at 690 to 901 (EKEEESLNQG…GNEEPLSLDW (212 aa)) is disordered. The residue at position 724 (Thr-724) is a Phosphothreonine. A compositionally biased stretch (acidic residues) spans 757 to 769 (PGEEGETAGEGET). Basic and acidic residues-rich tracts occupy residues 813-825 (EIHAEDGEMKGNE) and 835-849 (AENHGEAKNDEKGVE). A compositionally biased stretch (acidic residues) spans 857–892 (GDSEEEEEEEEEQEEEEEEEEQEEEEEEEEEEEEKG). A helical transmembrane segment spans residues 908 to 928 (QAIYLFLLPIVFPLWLTVPDV). Over 929–935 (RRQESRK) the chain is Extracellular. The chain crosses the membrane as a helical span at residues 936–956 (FFVFTFLGSIMWIAMFSYLMV). The Cytoplasmic portion of the chain corresponds to 957-971 (WWAHQVGETIGISEE). The helical transmembrane segment at 972 to 992 (IMGLTILAAGTSIPDLITSVI) threads the bilayer. One copy of the Alpha-2 repeat lies at 979–1010 (AAGTSIPDLITSVIVARKGLGDMAVSSSVGSN). Residues 993–1010 (VARKGLGDMAVSSSVGSN) lie on the Extracellular side of the membrane. The helical transmembrane segment at 1011 to 1031 (IFDITVGLPVPWLLFSLINGL) threads the bilayer. Topologically, residues 1032–1039 (QPVPVSSN) are cytoplasmic. The chain crosses the membrane as a helical span at residues 1040-1060 (GLFCAIVLLFLMLLFVISSIA). Topologically, residues 1061 to 1068 (SCKWRMNK) are extracellular. The chain crosses the membrane as a helical span at residues 1069 to 1089 (ILGFTMFLLYFVFLIISVMLE). The Cytoplasmic segment spans residues 1090 to 1099 (DRIISCPVSV).

The protein belongs to the Ca(2+):cation antiporter (CaCA) (TC 2.A.19) family. SLC24A subfamily. The uncleaved signal sequence is required for efficient membrane targeting and proper membrane integration. As to expression, expressed in the retina, particularly in the inner segment, outer and inner nuclear layers, and ganglion cell layer.

It localises to the cell membrane. The enzyme catalyses Ca(2+)(out) + K(+)(out) + 4 Na(+)(in) = Ca(2+)(in) + K(+)(in) + 4 Na(+)(out). Its function is as follows. Calcium, potassium:sodium antiporter that transports 1 Ca(2+) and 1 K(+) in exchange for 4 Na(+). Critical component of the visual transduction cascade, controlling the calcium concentration of outer segments during light and darkness. Light causes a rapid lowering of cytosolic free calcium in the outer segment of both retinal rod and cone photoreceptors and the light-induced lowering of calcium is caused by extrusion via this protein which plays a key role in the process of light adaptation. This is Sodium/potassium/calcium exchanger 1 from Homo sapiens (Human).